We begin with the raw amino-acid sequence, 500 residues long: Probable malate:quinone oxidoreductase (500 aa).

This sequence belongs to the MQO family. The cofactor is FAD.

The enzyme catalyses (S)-malate + a quinone = a quinol + oxaloacetate. It participates in carbohydrate metabolism; tricarboxylic acid cycle; oxaloacetate from (S)-malate (quinone route): step 1/1. The chain is Probable malate:quinone oxidoreductase from Bacillus cereus (strain B4264).